A 623-amino-acid polypeptide reads, in one-letter code: Chaperone protein HtpG (623 aa).

Residues 1-341 are a; substrate-binding; it reads MEKREFKAES…SQDLSLNISR (341 aa). A b region spans residues 342–549; it reads EMLQHDRQLS…EGEVSIEMEK (208 aa). Residues 550 to 623 are c; sequence ILSAMPNNQG…FTNDICKLMK (74 aa).

This sequence belongs to the heat shock protein 90 family. As to quaternary structure, homodimer.

It localises to the cytoplasm. Molecular chaperone. Has ATPase activity. This is Chaperone protein HtpG from Clostridium perfringens (strain ATCC 13124 / DSM 756 / JCM 1290 / NCIMB 6125 / NCTC 8237 / Type A).